We begin with the raw amino-acid sequence, 218 residues long: Adenylate kinase (218 aa).

Position 11–16 (11–16 (GAGKGT)) interacts with ATP. Residues 31–60 (STGDMFREAMANKTKVGLEAKSYIDKGNLV) are NMP. AMP-binding positions include Thr32, Arg37, 58-60 (NLV), 86-89 (GFPR), and Gln93. Residues 127 to 165 (ARYMCKNCGATYNKISKQPKVEGTCDRCGSHEFYQREDD) are LID. Arg128 lines the ATP pocket. Zn(2+) is bound by residues Cys131 and Cys134. An ATP-binding site is contributed by 137–138 (TY). The Zn(2+) site is built by Cys151 and Cys154. The AMP site is built by Arg162 and Arg173. An ATP-binding site is contributed by Gln201.

It belongs to the adenylate kinase family. Monomer.

It is found in the cytoplasm. It carries out the reaction AMP + ATP = 2 ADP. It functions in the pathway purine metabolism; AMP biosynthesis via salvage pathway; AMP from ADP: step 1/1. Catalyzes the reversible transfer of the terminal phosphate group between ATP and AMP. Plays an important role in cellular energy homeostasis and in adenine nucleotide metabolism. This Lactobacillus acidophilus (strain ATCC 700396 / NCK56 / N2 / NCFM) protein is Adenylate kinase.